Reading from the N-terminus, the 156-residue chain is Ribosome maturation factor RimP (156 aa).

The protein belongs to the RimP family.

It localises to the cytoplasm. Its function is as follows. Required for maturation of 30S ribosomal subunits. The protein is Ribosome maturation factor RimP of Bacillus cytotoxicus (strain DSM 22905 / CIP 110041 / 391-98 / NVH 391-98).